A 264-amino-acid polypeptide reads, in one-letter code: Triosephosphate isomerase (264 aa).

13–15 (NWK) lines the substrate pocket. The Electrophile role is filled by H98. E170 (proton acceptor) is an active-site residue. Residues G176, S216, and 237-238 (GG) each bind substrate.

The protein belongs to the triosephosphate isomerase family. Homodimer.

The protein localises to the cytoplasm. The catalysed reaction is D-glyceraldehyde 3-phosphate = dihydroxyacetone phosphate. It functions in the pathway carbohydrate biosynthesis; gluconeogenesis. The protein operates within carbohydrate degradation; glycolysis; D-glyceraldehyde 3-phosphate from glycerone phosphate: step 1/1. Its function is as follows. Involved in the gluconeogenesis. Catalyzes stereospecifically the conversion of dihydroxyacetone phosphate (DHAP) to D-glyceraldehyde-3-phosphate (G3P). This chain is Triosephosphate isomerase, found in Protochlamydia amoebophila (strain UWE25).